A 618-amino-acid polypeptide reads, in one-letter code: Glycine--tRNA ligase 2 (618 aa).

Position 187 (Glu187) interacts with glycine. Residues 219-221 (RNE) and 230-231 (RV) contribute to the ATP site. Glu238 lines the glycine pocket. 347 to 348 (EC) is a binding site for ATP. Position 466–468 (466–468 (EPS)) interacts with glycine. Position 473 (Arg473) interacts with ATP.

The protein belongs to the class-II aminoacyl-tRNA synthetase family. As to quaternary structure, homodimer.

The protein localises to the cytoplasm. The catalysed reaction is tRNA(Gly) + glycine + ATP = glycyl-tRNA(Gly) + AMP + diphosphate. It carries out the reaction 2 ATP + H(+) = P(1),P(4)-bis(5'-adenosyl) tetraphosphate + diphosphate. Its function is as follows. Catalyzes the ATP-dependent ligation of glycine to the 3'-end of its cognate tRNA, via the formation of an aminoacyl-adenylate intermediate (Gly-AMP). Also produces diadenosine tetraphosphate (Ap4A), a universal pleiotropic signaling molecule needed for cell regulation pathways, by direct condensation of 2 ATPs. Thereby, may play a special role in Ap4A homeostasis. The chain is Glycine--tRNA ligase 2 (GRS2) from Saccharomyces cerevisiae (strain ATCC 204508 / S288c) (Baker's yeast).